The sequence spans 441 residues: N-succinylarginine dihydrolase (441 aa).

Substrate is bound by residues 19–28 (AGLSFGNEAS), asparagine 110, and 137–138 (HR). The active site involves glutamate 174. Arginine 212 contacts substrate. Histidine 248 is a catalytic residue. Aspartate 250 and asparagine 359 together coordinate substrate. Catalysis depends on cysteine 365, which acts as the Nucleophile.

It belongs to the succinylarginine dihydrolase family. Homodimer.

It carries out the reaction N(2)-succinyl-L-arginine + 2 H2O + 2 H(+) = N(2)-succinyl-L-ornithine + 2 NH4(+) + CO2. Its pathway is amino-acid degradation; L-arginine degradation via AST pathway; L-glutamate and succinate from L-arginine: step 2/5. Catalyzes the hydrolysis of N(2)-succinylarginine into N(2)-succinylornithine, ammonia and CO(2). This chain is N-succinylarginine dihydrolase, found in Erwinia tasmaniensis (strain DSM 17950 / CFBP 7177 / CIP 109463 / NCPPB 4357 / Et1/99).